A 273-amino-acid chain; its full sequence is Shikimate dehydrogenase (NADP(+)) (273 aa).

Residues 14-16 (SKS) and Thr-61 contribute to the shikimate site. Lys-65 serves as the catalytic Proton acceptor. Asp-77 contacts NADP(+). The shikimate site is built by Asn-86 and Asp-102. Residues 127 to 131 (GAGGA), 151 to 156 (NRTGAR), and Met-215 each bind NADP(+). Tyr-217 contacts shikimate. Gly-239 serves as a coordination point for NADP(+).

It belongs to the shikimate dehydrogenase family. As to quaternary structure, homodimer.

The enzyme catalyses shikimate + NADP(+) = 3-dehydroshikimate + NADPH + H(+). It functions in the pathway metabolic intermediate biosynthesis; chorismate biosynthesis; chorismate from D-erythrose 4-phosphate and phosphoenolpyruvate: step 4/7. Involved in the biosynthesis of the chorismate, which leads to the biosynthesis of aromatic amino acids. Catalyzes the reversible NADPH linked reduction of 3-dehydroshikimate (DHSA) to yield shikimate (SA). This chain is Shikimate dehydrogenase (NADP(+)), found in Thioalkalivibrio sulfidiphilus (strain HL-EbGR7).